Here is a 355-residue protein sequence, read N- to C-terminus: MAQRKKLLVMAGGTGGHVFPAIAVAQYLQKQGWDICWLGTKDRMEAQLVPKHGIPIEFIQISGLRGKGIKALLGAPFAICRAIMQARKIILRQKPDAVLGMGGYVSGPGGVAAKLCGVPVILHEQNAVAGLTNVWLSKIAKRVLQAFPTAFPNAEVVGNPVRQDLFSMPDPEQRFAERTGKLRVLVVGGSQGARVLNLTVPEMAARLTDKLEIRHQVGAGSVEKITALYEEKGALSADVKITEFIDNMAEAYAWADIVICRSGALTVCELAAVGTPAIFVPFRHKDQQQYLNAKYLADVGAAKIVQQAELNADVLVDLLTNLDREQLLAMAIKAKQMSAPFAAQRVAEVIIENAN.

UDP-N-acetyl-alpha-D-glucosamine is bound by residues 14 to 16 (TGG), Asn126, Arg162, Ser190, Ile245, 264 to 269 (ALTVCE), and Gln289.

It belongs to the glycosyltransferase 28 family. MurG subfamily.

It localises to the cell inner membrane. It catalyses the reaction di-trans,octa-cis-undecaprenyl diphospho-N-acetyl-alpha-D-muramoyl-L-alanyl-D-glutamyl-meso-2,6-diaminopimeloyl-D-alanyl-D-alanine + UDP-N-acetyl-alpha-D-glucosamine = di-trans,octa-cis-undecaprenyl diphospho-[N-acetyl-alpha-D-glucosaminyl-(1-&gt;4)]-N-acetyl-alpha-D-muramoyl-L-alanyl-D-glutamyl-meso-2,6-diaminopimeloyl-D-alanyl-D-alanine + UDP + H(+). It functions in the pathway cell wall biogenesis; peptidoglycan biosynthesis. Functionally, cell wall formation. Catalyzes the transfer of a GlcNAc subunit on undecaprenyl-pyrophosphoryl-MurNAc-pentapeptide (lipid intermediate I) to form undecaprenyl-pyrophosphoryl-MurNAc-(pentapeptide)GlcNAc (lipid intermediate II). The sequence is that of UDP-N-acetylglucosamine--N-acetylmuramyl-(pentapeptide) pyrophosphoryl-undecaprenol N-acetylglucosamine transferase from Mannheimia succiniciproducens (strain KCTC 0769BP / MBEL55E).